The following is a 1351-amino-acid chain: Transcriptional regulator ovo (1351 aa).

The segment at 1–31 (MPKIFLIKNRLHQQQQRLLESQNLLQHKNQD) is required for Ubr3 binding and tal-dependent proteolytic processing. Disordered regions lie at residues 22-77 (QNLL…SDQQ), 100-119 (LDHL…NPNQ), 184-397 (NSPI…SDEE), 447-554 (AGHG…HFNA), 640-665 (SNSK…GQTS), 778-807 (DDEE…PVEQ), 834-887 (GSNQ…YQHA), 916-1000 (LLSQ…PSPT), 1023-1044 (PMSS…GSSN), and 1113-1192 (SKHG…DSSS). A compositionally biased stretch (pro residues) spans 49 to 60 (SPTPTSQPPPEP). 2 stretches are compositionally biased toward low complexity: residues 61 to 72 (QGQGQQVLGQVP) and 104 to 119 (NQNQ…NPNQ). The segment covering 205–232 (EKEKPAEREREKSDERTEQVEKEERVER) has biased composition (basic and acidic residues). Positions 233–242 (EEEEDDEVDV) are enriched in acidic residues. Residues 262–272 (QRKEYPQEPKD) are compositionally biased toward basic and acidic residues. Residues 324 to 340 (TPPPADQRPSPPPPRDP) show a composition bias toward pro residues. Residues 447–486 (AGHGRNSSSSSGAAGQGFQSSGFGSQNSGSGSSSGNQNAG) show a composition bias toward low complexity. Positions 487–505 (SGAGSPGSGAGGGGGMGGG) are enriched in gly residues. Positions 530-552 (KSGQQSTASNNTGQSPGANHSHF) are enriched in polar residues. The segment covering 644–653 (FHNHHHHHQH) has biased composition (basic residues). The segment covering 793–807 (STPSLTPDSVTPVEQ) has biased composition (polar residues). Low complexity-rich tracts occupy residues 835–878 (SNQQ…HVQQ), 916–962 (LLSQ…QQQQ), 970–979 (QQQQQPQPQS), 1025–1044 (SSSS…GSSN), and 1121–1175 (HQQQ…HGSA). 4 C2H2-type zinc fingers span residues 1197-1219 (FVCR…MKCH), 1225-1247 (YLCT…TRTH), 1253-1276 (YKCN…QKVH), and 1292-1315 (YVCE…KNNH).

As to quaternary structure, interacts (via N-terminus) with Ubr3; the interaction is mediated by tal. In terms of processing, N-terminus is proteolytically cleaved and ubiquitinated via a tal-dependent mechanism, leading to the proteolytic degradation of the N-terminus and the production of transcriptional activator shavenbaby, a truncated form with transcriptional activator activity.

It is found in the cytoplasm. The protein resides in the nucleus. It localises to the nucleoplasm. Transcriptional regulator with essential functions in the germline and soma. Plays an essential role in regulating the formation of apical cell extensions such as denticles and aristae, and initiating cytoskeletal remodeling during epidermal differentiation. Functionally, transcriptional repressor which functions in postembryonic development. The full-length unprocessed form acts as a transcriptional repressor (Transcriptional repressor svb). In terms of biological role, transcriptional activator which initiates trichome development and also promotes tarsal joint development. Has an essential somatic role regulating the tal-dependent formation of trichomes, and initiating cytoskeletal remodeling during epidermal differentiation. Function with SoxN is required for correct denticle morphogenesis on the embryonic epidermis. SoxN and svb appear to act both independently and in conjunction with each other to activate certain genes involved in denticle morphogenesis; Svb appears to be involved in regulating denticle length whereas SoxN regulates the denticle base circumference. Also functions in the development of other apical cell extensions such as bristles. Also has an important role in tarsal joint development, repressing expression of the N ligand Dl and defining its signaling boundary. Its function is as follows. Transcriptional repressor which is specifically involved in female germline development, where it functions antagonistically to isoform D. Negatively regulates expression of otu and may also have autoregulatory activity. Negatively regulates expression of piwi in the primordial germ cells (PGCs). Transcriptional activator which is specifically involved in female germline development, where it functions antagonistically to isoform C. Necessary and sufficient for normal oogenesis. Required in the primordial germ cells (PGCs) for normal development of male and female germline cells. Plays a role in germline sex determination. Binds the promoter DNA and positively regulates the transcription of the otu gene in a stage-specific manner. May have autoregulatory activity. This Drosophila melanogaster (Fruit fly) protein is Transcriptional regulator ovo.